The sequence spans 1193 residues: DNA polymerase (1193 aa).

The interval M1 to V88 is disordered. Residues P48 to P68 show a composition bias toward low complexity.

Belongs to the DNA polymerase type-B family. As to quaternary structure, heterodimer with the terminal protein; this heterodimer binds to bp 9 to 18 of the genome. Forms a complex with viral pTP, DBP and hosts NFIA and POU2F1/OCT1 for initiation of replication.

It is found in the host nucleus. The catalysed reaction is DNA(n) + a 2'-deoxyribonucleoside 5'-triphosphate = DNA(n+1) + diphosphate. Eukaryotic-type DNA polymerase involved in viral genomic replication. DNA synthesis is protein primed, and acts in a strand displacement replication. Assembles in complex with viral pTP, DBP, host NFIA and host POU2F1/OCT1 on viral origin of replication. The polymerase covalently transfers dCMP onto pTP, thereby initiating complementary strand synthesis. The sequence is that of DNA polymerase from Homo sapiens (Human).